The chain runs to 463 residues: Paraneoplastic antigen Ma3 (463 aa).

Positions 363 to 410 (VGAVPLPASGNSFDARPSQGYRRRRGRGQHRRGGVARAGSRGSRKRKR) are disordered. The span at 383–396 (YRRRRGRGQHRRGG) shows a compositional bias: basic residues. The segment at 412-429 (TFCYSCGEDGHIRVQCIN) adopts a CCHC-type zinc-finger fold. The segment at 440–463 (KQAAVESGNGNWAWDKSHPKSKAK) is disordered.

This sequence belongs to the PNMA family. As to expression, expressed at high levels in the brain and testis. Expressed at lower levels in the heart, trachea and kidney.

The protein localises to the nucleus. Its subcellular location is the nucleolus. The chain is Paraneoplastic antigen Ma3 (PNMA3) from Homo sapiens (Human).